The primary structure comprises 380 residues: Alcohol dehydrogenase 2 (380 aa).

8 residues coordinate Zn(2+): C48, T50, H70, C100, C103, C106, C114, and C178. The an alcohol site is built by T50 and H70. T50 contributes to the NAD(+) binding site. Residues G203–G208, D227, R232, T273, V296, V296–V298, F323, and R373 each bind NAD(+).

The protein belongs to the zinc-containing alcohol dehydrogenase family. As to quaternary structure, homodimer. Homotetramer. Zn(2+) is required as a cofactor.

It localises to the cytoplasm. It carries out the reaction a primary alcohol + NAD(+) = an aldehyde + NADH + H(+). The enzyme catalyses a secondary alcohol + NAD(+) = a ketone + NADH + H(+). The polypeptide is Alcohol dehydrogenase 2 (ADH2) (Solanum lycopersicum (Tomato)).